Here is a 256-residue protein sequence, read N- to C-terminus: Nuclear shuttle protein (256 aa).

The Bipartite nuclear localization signal signature appears at 21–42; sequence NSLIRQQSLFKRNVSKRRPFQT. The short motif at 81-96 is the Nuclear localization signal element; it reads DIAKSLPNRTRSYIKL. An interaction with Arabidopsis thaliana NSI protein region spans residues 150 to 187; that stretch reads ELFGARIHSHGNLAIVPSLKDRFYIRHVLKRVISVEKD.

The protein belongs to the begomovirus nuclear shuttle protein family. In terms of assembly, binds to single-stranded and double-stranded viral DNA. Interacts with the host nuclear shuttle interacting (NSI) protein. This interaction may allow NSP to recruit NSI monomers to the viral genome and thus regulate nuclear export of viral genome by NSP.

The protein localises to the host nucleus. It localises to the host cytoplasm. The protein resides in the host cell membrane. Binds to the genomic viral ssDNA, shuttles it into and out of the cell nucleus. Begomoviruses use 2 proteins to transport their DNA from cell to cell. The nuclear shuttle protein (NSP) shuttles it between nucleus and cytoplasm and the movement protein (MP) probably transports the DNA-NSP complex to the cell periphery and facilitates movement across the cell wall. In Potato yellow mosaic virus (isolate Venezuela) (PYMV), this protein is Nuclear shuttle protein.